The sequence spans 1485 residues: Chromosome partition protein MukB (1485 aa).

An ATP-binding site is contributed by 34-41 (GGNGAGKS). Coiled coils occupy residues 337 to 480 (LNLV…QAYQ) and 509 to 605 (QHLA…PVWL). The flexible hinge stretch occupies residues 666–783 (PSGAEDARLI…EVPLFGRAAR (118 aa)). Coiled-coil stretches lie at residues 835–915 (EAEI…IQQH) and 977–1116 (GMLT…AKAG).

The protein belongs to the SMC family. MukB subfamily. Homodimerization via its hinge domain. Binds to DNA via its C-terminal region. Interacts, and probably forms a ternary complex, with MukE and MukF via its C-terminal region. The complex formation is stimulated by calcium or magnesium. Interacts with tubulin-related protein FtsZ.

The protein localises to the cytoplasm. Its subcellular location is the nucleoid. In terms of biological role, plays a central role in chromosome condensation, segregation and cell cycle progression. Functions as a homodimer, which is essential for chromosome partition. Involved in negative DNA supercoiling in vivo, and by this means organize and compact chromosomes. May achieve or facilitate chromosome segregation by condensation DNA from both sides of a centrally located replisome during cell division. The sequence is that of Chromosome partition protein MukB from Yersinia pseudotuberculosis serotype IB (strain PB1/+).